Consider the following 314-residue polypeptide: ATP synthase gamma chain (314 aa).

The protein belongs to the ATPase gamma chain family. In terms of assembly, F-type ATPases have 2 components, CF(1) - the catalytic core - and CF(0) - the membrane proton channel. CF(1) has five subunits: alpha(3), beta(3), gamma(1), delta(1), epsilon(1). CF(0) has three main subunits: a, b and c.

It localises to the cellular thylakoid membrane. Its function is as follows. Produces ATP from ADP in the presence of a proton gradient across the membrane. The gamma chain is believed to be important in regulating ATPase activity and the flow of protons through the CF(0) complex. This chain is ATP synthase gamma chain, found in Synechococcus sp. (strain JA-3-3Ab) (Cyanobacteria bacterium Yellowstone A-Prime).